Here is a 480-residue protein sequence, read N- to C-terminus: tRNA-2-methylthio-N(6)-dimethylallyladenosine synthase (480 aa).

The MTTase N-terminal domain maps to 3 to 120; that stretch reads KKLYIKTWGC…LPEMLNQLQH (118 aa). Cys-12, Cys-49, Cys-83, Cys-157, Cys-161, and Cys-164 together coordinate [4Fe-4S] cluster. One can recognise a Radical SAM core domain in the interval 143–375; the sequence is KADGASAFVS…QEQITHQALR (233 aa). The region spanning 378-441 is the TRAM domain; sequence RQMLNTEQRV…ANSLRGELVR (64 aa).

This sequence belongs to the methylthiotransferase family. MiaB subfamily. In terms of assembly, monomer. [4Fe-4S] cluster serves as cofactor.

It localises to the cytoplasm. The enzyme catalyses N(6)-dimethylallyladenosine(37) in tRNA + (sulfur carrier)-SH + AH2 + 2 S-adenosyl-L-methionine = 2-methylsulfanyl-N(6)-dimethylallyladenosine(37) in tRNA + (sulfur carrier)-H + 5'-deoxyadenosine + L-methionine + A + S-adenosyl-L-homocysteine + 2 H(+). Catalyzes the methylthiolation of N6-(dimethylallyl)adenosine (i(6)A), leading to the formation of 2-methylthio-N6-(dimethylallyl)adenosine (ms(2)i(6)A) at position 37 in tRNAs that read codons beginning with uridine. In Colwellia psychrerythraea (strain 34H / ATCC BAA-681) (Vibrio psychroerythus), this protein is tRNA-2-methylthio-N(6)-dimethylallyladenosine synthase.